Consider the following 720-residue polypeptide: Phosphoribosylformylglycinamidine synthase subunit PurL (720 aa).

Histidine 34 is an active-site residue. Tyrosine 37 is a binding site for ATP. Glutamate 83 serves as a coordination point for Mg(2+). Residues 84 to 87 (SHNH) and arginine 106 contribute to the substrate site. Histidine 85 (proton acceptor) is an active-site residue. Aspartate 107 lines the Mg(2+) pocket. Residue glutamine 231 participates in substrate binding. Aspartate 259 contacts Mg(2+). 303–305 (ESQ) is a substrate binding site. Residues aspartate 480 and glycine 517 each coordinate ATP. Asparagine 518 is a binding site for Mg(2+). Serine 520 contributes to the substrate binding site.

The protein belongs to the FGAMS family. In terms of assembly, monomer. Part of the FGAM synthase complex composed of 1 PurL, 1 PurQ and 2 PurS subunits.

Its subcellular location is the cytoplasm. It carries out the reaction N(2)-formyl-N(1)-(5-phospho-beta-D-ribosyl)glycinamide + L-glutamine + ATP + H2O = 2-formamido-N(1)-(5-O-phospho-beta-D-ribosyl)acetamidine + L-glutamate + ADP + phosphate + H(+). It functions in the pathway purine metabolism; IMP biosynthesis via de novo pathway; 5-amino-1-(5-phospho-D-ribosyl)imidazole from N(2)-formyl-N(1)-(5-phospho-D-ribosyl)glycinamide: step 1/2. Functionally, part of the phosphoribosylformylglycinamidine synthase complex involved in the purines biosynthetic pathway. Catalyzes the ATP-dependent conversion of formylglycinamide ribonucleotide (FGAR) and glutamine to yield formylglycinamidine ribonucleotide (FGAM) and glutamate. The FGAM synthase complex is composed of three subunits. PurQ produces an ammonia molecule by converting glutamine to glutamate. PurL transfers the ammonia molecule to FGAR to form FGAM in an ATP-dependent manner. PurS interacts with PurQ and PurL and is thought to assist in the transfer of the ammonia molecule from PurQ to PurL. In Haloarcula marismortui (strain ATCC 43049 / DSM 3752 / JCM 8966 / VKM B-1809) (Halobacterium marismortui), this protein is Phosphoribosylformylglycinamidine synthase subunit PurL.